The sequence spans 375 residues: Serpin B5 (375 aa).

3 N-linked (GlcNAc...) asparagine glycosylation sites follow: Asn-133, Asn-298, and Asn-361.

Belongs to the serpin family. Ov-serpin subfamily. Interacts with IRF6.

The protein resides in the secreted. The protein localises to the extracellular space. Tumor suppressor. It blocks the growth, invasion, and metastatic properties of mammary tumors. As it does not undergo the S (stressed) to R (relaxed) conformational transition characteristic of active serpins, it exhibits no serine protease inhibitory activity. The polypeptide is Serpin B5 (Serpinb5) (Mus musculus (Mouse)).